A 461-amino-acid polypeptide reads, in one-letter code: Cysteine--tRNA ligase (461 aa).

A Zn(2+)-binding site is contributed by C28. Residues I30–H40 carry the 'HIGH' region motif. Zn(2+) is bound by residues C209, H234, and E238. The short motif at K266–S270 is the 'KMSKS' region element. K269 serves as a coordination point for ATP.

This sequence belongs to the class-I aminoacyl-tRNA synthetase family. In terms of assembly, monomer. Requires Zn(2+) as cofactor.

The protein resides in the cytoplasm. It catalyses the reaction tRNA(Cys) + L-cysteine + ATP = L-cysteinyl-tRNA(Cys) + AMP + diphosphate. This is Cysteine--tRNA ligase from Escherichia coli (strain SMS-3-5 / SECEC).